The sequence spans 311 residues: Olfactory receptor 10G4 (311 aa).

Residues 1–23 (MSNASLVTAFILTGLPHAPGLDA) are Extracellular-facing. The N-linked (GlcNAc...) asparagine glycan is linked to Asn3. The chain crosses the membrane as a helical span at residues 24 to 44 (LLFGIFLVVYVLTVLGNLLIL). Over 45–52 (LVIRVDSH) the chain is Cytoplasmic. The chain crosses the membrane as a helical span at residues 53–73 (LHTPMYYFLTNLSFIDMWFST). Residues 74 to 98 (VTVPKMLMTLVSPSGRAISFHSCVA) lie on the Extracellular side of the membrane. A disulfide bridge connects residues Cys96 and Cys188. Residues 99–119 (QLYFFHFLGSTECFLYTVMSY) traverse the membrane as a helical segment. Residues 120–138 (DRYLAISYPLRYTSMMSGS) lie on the Cytoplasmic side of the membrane. A helical membrane pass occupies residues 139-159 (RCALLATGTWLSGSLHSAVQT). The Extracellular segment spans residues 160–196 (ILTFHLPYCGPNQIQHYFCDAPPILKLACADTSANVM). A helical transmembrane segment spans residues 197-216 (VIFVDIGIVASGCFVLIVLS). At 217-236 (YVSIVCSILRIRTSDGRRRA) the chain is on the cytoplasmic side. The chain crosses the membrane as a helical span at residues 237–257 (FQTCASHCIVVLCFFVPCVVI). Topologically, residues 258–268 (YLRPGSMDAMD) are extracellular. Residues 269–289 (GVVAIFYTVLTPLLNPVVYTL) form a helical membrane-spanning segment. Residues 290–311 (RNKEVKKAVLKLRDKVAHPQRK) lie on the Cytoplasmic side of the membrane.

Belongs to the G-protein coupled receptor 1 family.

It is found in the cell membrane. In terms of biological role, odorant receptor. This chain is Olfactory receptor 10G4 (OR10G4), found in Homo sapiens (Human).